The sequence spans 631 residues: MHGLRLVCSIGTLPLVILAYPAASLHTTSAAVDLDSLRLTSNSEYVNSVHVDTNRSVAVSAEEHYTDTAARLVQNIVPGASFRLIDDHFVGDNGVAHVYFRQTLHGIDIDNADFNVNIGKDGLVLSFGHSFFTGALPSSHLDNTNVLSPEAALRGARDAIQLPLTIDNVSTEAAEGRNEYIFREAVGAVSDPKAKLVYLVKPEGTLALTWRIETDMYEHWLLTYIDAETTTVHGVVDYVADATYQVYPWGTNDPAEGHRTIVTDPWDLSASAYTWISDGRDNYTTTRGNNAIAHWNPTGGGSYLYNLRPSDPNLNFQWPYSPNMSPPRSYINASIVQLFYTANAYHDLLYTLGFTESAGNFQWNNSAHGGRDKDYVILNAQDGSGFSNANFATPPDGIPGRMRMYIWIESTPSRDGSFDAGIVIHEYTHGVSNRLTGGSHNAGCLSALESGGMGEGWGDFMATAIRIKPNDTRTTSYTMGAWADNDKCGVRDYPYSTSFTENPLNYTSVNTMNGVHAIGTVWATMLYEVLWNLIDKYGKNDGSRPVFRNGVPTDGKYLMMKLVVDGMALQPCNPNFVQARDAILDADIVLTGGKNRCEIWRGFAKRGLGQGAAHSSLNWMRRGSTLLPTGC.

The signal sequence occupies residues 1–19; it reads MHGLRLVCSIGTLPLVILA. A propeptide spanning residues 20–241 is cleaved from the precursor; that stretch reads YPAASLHTTS…VHGVVDYVAD (222 aa). N-linked (GlcNAc...) asparagine glycans are attached at residues N282, N332, and N364. Position 425 (H425) interacts with Zn(2+). Residue E426 is part of the active site. Position 429 (H429) interacts with Zn(2+). N470 and N505 each carry an N-linked (GlcNAc...) asparagine glycan.

The protein belongs to the peptidase M36 family. It depends on Zn(2+) as a cofactor.

The protein localises to the secreted. Its function is as follows. Secreted metalloproteinase that allows assimilation of proteinaceous substrates. The chain is Extracellular metalloproteinase mep (mep) from Aspergillus niger (strain ATCC MYA-4892 / CBS 513.88 / FGSC A1513).